Here is a 152-residue protein sequence, read N- to C-terminus: Ribonuclease pancreatic beta-type (152 aa).

A signal peptide spans 1 to 25 (MGLXKSFALFSLLVLVLGWVQPSLS). The segment at 25-53 (SGESRESSADKFKRQHMDPDSPSKSSPTY) is disordered. The segment covering 27-45 (ESRESSADKFKRQHMDPDS) has biased composition (basic and acidic residues). Substrate contacts are provided by Lys-35 and Arg-38. His-40 functions as the Proton acceptor in the catalytic mechanism. 4 disulfides stabilise this stretch: Cys-54-Cys-112, Cys-68-Cys-123, Cys-86-Cys-138, and Cys-93-Cys-100. Residues 69 to 73 (KRVNT) and Lys-94 each bind substrate. His-147 serves as the catalytic Proton donor.

It belongs to the pancreatic ribonuclease family. Monomer.

Its subcellular location is the secreted. It carries out the reaction an [RNA] containing cytidine + H2O = an [RNA]-3'-cytidine-3'-phosphate + a 5'-hydroxy-ribonucleotide-3'-[RNA].. It catalyses the reaction an [RNA] containing uridine + H2O = an [RNA]-3'-uridine-3'-phosphate + a 5'-hydroxy-ribonucleotide-3'-[RNA].. Functionally, endonuclease that catalyzes the cleavage of RNA on the 3' side of pyrimidine nucleotides. Acts on single-stranded and double-stranded RNA. The chain is Ribonuclease pancreatic beta-type from Rattus tiomanicus (Malayan field rat).